A 184-amino-acid chain; its full sequence is Large ribosomal subunit protein uL15 (184 aa).

The segment at 1-50 (MDLSSLRPAKGAVKNKKRVGRGQGSGNGTTAGKGNKGQQARSGYKRPINE) is disordered. Gly residues predominate over residues 21–35 (RGQGSGNGTTAGKGN).

The protein belongs to the universal ribosomal protein uL15 family. In terms of assembly, part of the 50S ribosomal subunit.

In terms of biological role, binds to the 23S rRNA. This is Large ribosomal subunit protein uL15 from Chlorobium luteolum (strain DSM 273 / BCRC 81028 / 2530) (Pelodictyon luteolum).